The sequence spans 309 residues: ATP synthase gamma chain (309 aa).

The protein belongs to the ATPase gamma chain family. As to quaternary structure, F-type ATPases have 2 components, CF(1) - the catalytic core - and CF(0) - the membrane proton channel. CF(1) has five subunits: alpha(3), beta(3), gamma(1), delta(1), epsilon(1). CF(0) has three main subunits: a, b and c.

The protein localises to the cell membrane. In terms of biological role, produces ATP from ADP in the presence of a proton gradient across the membrane. The gamma chain is believed to be important in regulating ATPase activity and the flow of protons through the CF(0) complex. This chain is ATP synthase gamma chain, found in Salinispora tropica (strain ATCC BAA-916 / DSM 44818 / JCM 13857 / NBRC 105044 / CNB-440).